A 320-amino-acid chain; its full sequence is Mitochondrial oxaloacetate transport protein (320 aa).

3 Solcar repeats span residues 21–114, 126–218, and 227–313; these read LGPV…IRRT, NKLA…AKRM, and EGMI…TNKL. The next 6 helical transmembrane spans lie at 26–47, 91–111, 129–145, 197–217, 233–253, and 285–306; these read GFLSGGLAACGAVTLTNPFEVI, GTAYVYQICLNGCRLGFYEPI, AINVASGAGSGLCGALF, AILRTVSGSSVQLPIYNWAKR, LTASAVSGFGVCCTMQIFDTV, and LYKGFGAHLARIAPHTIFCLTF.

This sequence belongs to the mitochondrial carrier (TC 2.A.29) family.

The protein localises to the mitochondrion inner membrane. It carries out the reaction a dicarboxylate(in) + sulfate(out) = a dicarboxylate(out) + sulfate(in). It catalyses the reaction (2S)-2-isopropylmalate(in) + sulfate(out) = (2S)-2-isopropylmalate(out) + sulfate(in). The catalysed reaction is (2R,3S)-3-isopropylmalate(in) + sulfate(out) = (2R,3S)-3-isopropylmalate(out) + sulfate(in). The enzyme catalyses malonate(in) + sulfate(out) = malonate(out) + sulfate(in). It carries out the reaction oxaloacetate(in) + sulfate(out) = oxaloacetate(out) + sulfate(in). It catalyses the reaction thiosulfate(in) + sulfate(out) = thiosulfate(out) + sulfate(in). Antiporter that exchanges dicarboxylates and sulfur oxoanions across the inner membrane of mitochondria. Exports alpha-isopropylmalate from mitochondrial matrix to the cytosol, where it serves as a precursor for leucine biosynthesis. The sequence is that of Mitochondrial oxaloacetate transport protein (oac1) from Schizosaccharomyces pombe (strain 972 / ATCC 24843) (Fission yeast).